Reading from the N-terminus, the 339-residue chain is Ferrochelatase (339 aa).

H202 and E283 together coordinate Fe cation.

This sequence belongs to the ferrochelatase family.

It localises to the cytoplasm. The catalysed reaction is heme b + 2 H(+) = protoporphyrin IX + Fe(2+). It functions in the pathway porphyrin-containing compound metabolism; protoheme biosynthesis; protoheme from protoporphyrin-IX: step 1/1. Its function is as follows. Catalyzes the ferrous insertion into protoporphyrin IX. The protein is Ferrochelatase of Psychrobacter arcticus (strain DSM 17307 / VKM B-2377 / 273-4).